The sequence spans 233 residues: 3-dehydroquinate dehydratase (233 aa).

3-dehydroquinate contacts are provided by residues 39–41 (EIR) and arginine 73. Histidine 132 serves as the catalytic Proton donor/acceptor. Lysine 159 serves as the catalytic Schiff-base intermediate with substrate. The 3-dehydroquinate site is built by arginine 196 and glutamine 219.

The protein belongs to the type-I 3-dehydroquinase family. In terms of assembly, homodimer.

The catalysed reaction is 3-dehydroquinate = 3-dehydroshikimate + H2O. Its pathway is metabolic intermediate biosynthesis; chorismate biosynthesis; chorismate from D-erythrose 4-phosphate and phosphoenolpyruvate: step 3/7. In terms of biological role, involved in the third step of the chorismate pathway, which leads to the biosynthesis of aromatic amino acids. Catalyzes the cis-dehydration of 3-dehydroquinate (DHQ) and introduces the first double bond of the aromatic ring to yield 3-dehydroshikimate. The protein is 3-dehydroquinate dehydratase of Methanococcoides burtonii (strain DSM 6242 / NBRC 107633 / OCM 468 / ACE-M).